Here is a 164-residue protein sequence, read N- to C-terminus: UPF0114 protein YqhA (164 aa).

3 helical membrane passes run 15–35 (LLAP…LKFF), 53–73 (LILV…LVMV), and 136–156 (LMWY…MGYL).

It belongs to the UPF0114 family.

It localises to the cell membrane. In Escherichia coli O6:H1 (strain CFT073 / ATCC 700928 / UPEC), this protein is UPF0114 protein YqhA.